A 112-amino-acid polypeptide reads, in one-letter code: 2Fe-2S ferredoxin (112 aa).

In terms of domain architecture, 2Fe-2S ferredoxin-type spans 1–104; it reads MPQIVILPHA…DLVVEIPKYT (104 aa). [2Fe-2S] cluster-binding residues include Cys42, Cys48, Cys51, and Cys87.

This sequence belongs to the adrenodoxin/putidaredoxin family. The cofactor is [2Fe-2S] cluster.

In terms of biological role, ferredoxin are iron-sulfur proteins that transfer electrons in a wide variety of metabolic reactions. In Pseudomonas aeruginosa (strain ATCC 15692 / DSM 22644 / CIP 104116 / JCM 14847 / LMG 12228 / 1C / PRS 101 / PAO1), this protein is 2Fe-2S ferredoxin (fdx).